Reading from the N-terminus, the 185-residue chain is UPF0301 protein Csal_0058 (185 aa).

It belongs to the UPF0301 (AlgH) family.

In Chromohalobacter salexigens (strain ATCC BAA-138 / DSM 3043 / CIP 106854 / NCIMB 13768 / 1H11), this protein is UPF0301 protein Csal_0058.